The chain runs to 402 residues: Beta-1,4-galactosyltransferase 1 (402 aa).

Over 1 to 24 (MKFREPLLGGSAAMPGASLQRACR) the chain is Cytoplasmic. A helical; Signal-anchor for type II membrane protein transmembrane segment spans residues 25-44 (LLVAVCALHLGVTLVYYLAG). At 45–402 (RDLRRLPQLV…KITVDIGTPS (358 aa)) the chain is on the lumenal side. The segment at 77-130 (LRLRGVAPPPPLQNSSKPRSRAPSNLDAYSHPGPGPGPGSNLTSAPVPSTTTRS) is disordered. N-linked (GlcNAc...) asparagine glycosylation is found at Asn90 and Asn117. The span at 116 to 130 (SNLTSAPVPSTTTRS) shows a compositional bias: polar residues. Residues Cys134 and Cys176 are joined by a disulfide bond. Residues 187–191 (PFRNR), 226–228 (FNR), 253–254 (VD), and Trp314 contribute to the UDP-alpha-D-galactose site. Cys247 and Cys266 form a disulfide bridge. Asp254 provides a ligand contact to Mn(2+). 316–319 (GEDD) contributes to the N-acetyl-D-glucosamine binding site. A Mn(2+)-binding site is contributed by His347. Residue 347–349 (HSR) participates in UDP-alpha-D-galactose binding. Position 359 (Arg359) interacts with N-acetyl-D-glucosamine.

The protein belongs to the glycosyltransferase 7 family. As to quaternary structure, homodimer; and heterodimer with alpha-lactalbumin to form lactose synthase. Interacts (via N-terminal cytoplasmic domain) with UBE2Q1 (via N-terminus); the interaction is direct. The cofactor is Mn(2+). In terms of processing, the soluble form derives from the membrane forms by proteolytic processing. In terms of tissue distribution, detected in milk (at protein level).

It localises to the golgi apparatus. It is found in the golgi stack membrane. Its subcellular location is the cell membrane. The protein resides in the cell surface. The protein localises to the cell projection. It localises to the filopodium. It is found in the secreted. The catalysed reaction is D-glucose + UDP-alpha-D-galactose = lactose + UDP + H(+). It catalyses the reaction an N-acetyl-beta-D-glucosaminyl derivative + UDP-alpha-D-galactose = a beta-D-galactosyl-(1-&gt;4)-N-acetyl-beta-D-glucosaminyl derivative + UDP + H(+). The enzyme catalyses N-acetyl-D-glucosamine + UDP-alpha-D-galactose = beta-D-galactosyl-(1-&gt;4)-N-acetyl-D-glucosamine + UDP + H(+). It carries out the reaction a beta-D-GlcNAc-(1-&gt;3)-beta-D-Gal-(1-&gt;4)-beta-D-Glc-(1&lt;-&gt;1)-Cer(d18:1(4E)) + UDP-alpha-D-galactose = a neolactoside nLc4Cer(d18:1(4E)) + UDP + H(+). The catalysed reaction is a beta-D-glucosylceramide + UDP-alpha-D-galactose = a beta-D-galactosyl-(1-&gt;4)-beta-D-glucosyl-(1&lt;-&gt;1)-ceramide + UDP + H(+). It catalyses the reaction a neolactoside IV(3)-beta-GlcNAc-nLc4Cer + UDP-alpha-D-galactose = a neolactoside nLc6Cer + UDP + H(+). It participates in protein modification; protein glycosylation. Functionally, the Golgi complex form catalyzes the production of lactose in the lactating mammary gland and could also be responsible for the synthesis of complex-type N-linked oligosaccharides in many glycoproteins as well as the carbohydrate moieties of glycolipids. Its function is as follows. The cell surface form functions as a recognition molecule during a variety of cell to cell and cell to matrix interactions, as those occurring during development and egg fertilization, by binding to specific oligosaccharide ligands on opposing cells or in the extracellular matrix. The secreted form is responsible for the synthesis of complex-type to N-linked oligosaccharides in many glycoproteins as well as the carbohydrate moieties of glycolipids. This Bos taurus (Bovine) protein is Beta-1,4-galactosyltransferase 1 (B4GALT1).